The sequence spans 226 residues: Lysosomal-associated transmembrane protein 4B (226 aa).

A run of 4 helical transmembrane segments spans residues 26 to 46 (ILLG…LLSA), 72 to 92 (MCIA…ATYG), 100 to 120 (WIIP…LVAV), and 153 to 173 (CLVL…GYLI). The interval 205–221 (PPYDDATVNSATKEPPP) is required for NEDD4 interaction.

This sequence belongs to the LAPTM4/LAPTM5 transporter family. Homooligomer; upon reaching the lysosomes. Interacts with MCOLN1. Interacts with NEDD4; may play a role in the lysosomal sorting of LAPTM4B; enhances HGS association with NEDD4; mediates inhibition of EGFR degradation. Interacts with PIP5K1C; promotes SNX5 association with LAPTM4B; kinase activity of PIP5K1C is required; interaction is regulated by phosphatidylinositol 4,5-bisphosphate generated by PIP5K1C. Interacts with HGS; promotes HGS ubiquitination. Interacts with SNX5. Interacts with SLC3A2 and SLC7A5; recruits SLC3A2 and SLC7A5 to lysosomes to promote leucine uptake into these organelles and is required for mTORC1 activation. Interacts with LRRC32; decreases TGFB1 production in regulatory T cells. Interacts with BECN1; competes with EGFR for LAPTM4B binding; regulates EGFR activity. Interacts with EGFR; positively correlates with EGFR activation. In terms of processing, undergoes proteolytic cleavage following delivery to the lysosomes. Ubiquitinated by NEDD4. In terms of tissue distribution, strongly expressed in fetal ovary, testis, adrenal gland, liver and uterus, and weakly expressed in the spleen.

Its subcellular location is the endomembrane system. The protein localises to the late endosome membrane. It localises to the cell membrane. The protein resides in the cell projection. It is found in the lysosome membrane. Its subcellular location is the endosome membrane. The protein localises to the endosome. It localises to the multivesicular body membrane. The protein resides in the multivesicular body lumen. Its function is as follows. Required for optimal lysosomal function. Blocks EGF-stimulated EGFR intraluminal sorting and degradation. Conversely by binding with the phosphatidylinositol 4,5-bisphosphate, regulates its PIP5K1C interaction, inhibits HGS ubiquitination and relieves LAPTM4B inhibition of EGFR degradation. Recruits SLC3A2 and SLC7A5 (the Leu transporter) to the lysosome, promoting entry of leucine and other essential amino acid (EAA) into the lysosome, stimulating activation of proton-transporting vacuolar (V)-ATPase protein pump (V-ATPase) and hence mTORC1 activation. Plays a role as negative regulator of TGFB1 production in regulatory T cells. Binds ceramide and facilitates its exit from late endosome in order to control cell death pathways. This Bos taurus (Bovine) protein is Lysosomal-associated transmembrane protein 4B.